The following is a 295-amino-acid chain: Manganese transport system membrane protein MntD (295 aa).

9 helical membrane-spanning segments follow: residues 7–27 (IIAT…FLVL), 42–62 (LLGI…YMFI), 63–83 (GAAA…SKGV), 87–107 (AAIG…LSVY), 138–158 (IGPK…VLIS), 174–194 (ALAL…MLSL), 203–223 (VGAV…HLLT), 227–247 (LYML…GYFF), and 253–273 (VSIS…AFLF).

The protein belongs to the ABC-3 integral membrane protein family. The complex is probably composed of two ATP-binding proteins (MntB), two transmembrane proteins (MntC and MntD) and a solute-binding protein (MntA).

The protein localises to the cell membrane. Probably part of the ABC transporter complex MntABCD involved in manganese import. Probably responsible for the translocation of the substrate across the membrane. This Bacillus subtilis (strain 168) protein is Manganese transport system membrane protein MntD.